The sequence spans 158 residues: NAD(P)H-quinone oxidoreductase subunit J, chloroplastic (158 aa).

Belongs to the complex I 30 kDa subunit family. NDH is composed of at least 16 different subunits, 5 of which are encoded in the nucleus.

The protein localises to the plastid. Its subcellular location is the chloroplast thylakoid membrane. It carries out the reaction a plastoquinone + NADH + (n+1) H(+)(in) = a plastoquinol + NAD(+) + n H(+)(out). The catalysed reaction is a plastoquinone + NADPH + (n+1) H(+)(in) = a plastoquinol + NADP(+) + n H(+)(out). Its function is as follows. NDH shuttles electrons from NAD(P)H:plastoquinone, via FMN and iron-sulfur (Fe-S) centers, to quinones in the photosynthetic chain and possibly in a chloroplast respiratory chain. The immediate electron acceptor for the enzyme in this species is believed to be plastoquinone. Couples the redox reaction to proton translocation, and thus conserves the redox energy in a proton gradient. The chain is NAD(P)H-quinone oxidoreductase subunit J, chloroplastic from Gossypium barbadense (Sea Island cotton).